Reading from the N-terminus, the 112-residue chain is Small ribosomal subunit protein uS17 (112 aa).

The protein belongs to the universal ribosomal protein uS17 family. As to quaternary structure, part of the 30S ribosomal subunit.

Its function is as follows. One of the primary rRNA binding proteins, it binds specifically to the 5'-end of 16S ribosomal RNA. The polypeptide is Small ribosomal subunit protein uS17 (Haloarcula marismortui (strain ATCC 43049 / DSM 3752 / JCM 8966 / VKM B-1809) (Halobacterium marismortui)).